A 232-amino-acid chain; its full sequence is Phosphoglycolate phosphatase (232 aa).

Catalysis depends on Asp-8, which acts as the Nucleophile. Mg(2+) is bound by residues Asp-8 and Asp-10. Substrate is bound at residue Lys-156. 2 residues coordinate Mg(2+): Asp-179 and Asp-183.

This sequence belongs to the archaeal SPP-like hydrolase family. Requires Mg(2+) as cofactor.

It catalyses the reaction 2-phosphoglycolate + H2O = glycolate + phosphate. In terms of biological role, catalyzes the dephosphorylation of 2-phosphoglycolate. The protein is Phosphoglycolate phosphatase of Methanopyrus kandleri (strain AV19 / DSM 6324 / JCM 9639 / NBRC 100938).